The following is a 289-amino-acid chain: Geranylgeranyl diphosphate synthase (289 aa).

Isopentenyl diphosphate is bound by residues Arg-43 and His-73. The Mg(2+) site is built by Asp-80 and Asp-86. A (2E,6E)-farnesyl diphosphate-binding site is contributed by Arg-91. Position 92 (Arg-92) interacts with isopentenyl diphosphate. (2E,6E)-farnesyl diphosphate is bound by residues Lys-170, Thr-171, and Gln-205.

Belongs to the FPP/GGPP synthase family. Mg(2+) is required as a cofactor.

The enzyme catalyses isopentenyl diphosphate + (2E,6E)-farnesyl diphosphate = (2E,6E,10E)-geranylgeranyl diphosphate + diphosphate. It participates in isoprenoid biosynthesis; geranylgeranyl diphosphate biosynthesis; geranylgeranyl diphosphate from farnesyl diphosphate and isopentenyl diphosphate: step 1/1. Its function is as follows. Catalyzes the condensation of farnesyl diphosphate (FPP) and isopentenyl diphosphate (IPP) to yield geranylgeranyl diphosphate (GGPP) needed for biosynthesis of carotenoids and diterpenes. This chain is Geranylgeranyl diphosphate synthase (crtE), found in Rhodobacter capsulatus (strain ATCC BAA-309 / NBRC 16581 / SB1003).